A 242-amino-acid polypeptide reads, in one-letter code: DNA repair protein RecO (242 aa).

It belongs to the RecO family. Monomer.

Functionally, involved in DNA repair and RecF pathway recombination. This Salmonella schwarzengrund (strain CVM19633) protein is DNA repair protein RecO.